We begin with the raw amino-acid sequence, 136 residues long: UPF0299 membrane protein PM0880 (136 aa).

Transmembrane regions (helical) follow at residues 5-25 (IVDL…GEWI), 29-49 (LNIG…GLTF), 67-87 (YMAL…DVLF), and 92-112 (VLLL…GLLS).

It belongs to the UPF0299 family.

It localises to the cell inner membrane. This is UPF0299 membrane protein PM0880 from Pasteurella multocida (strain Pm70).